Reading from the N-terminus, the 333-residue chain is Neuropeptides B/W receptor type 2 (333 aa).

Topologically, residues 1 to 45 (MQAAGHPEPLDSRGSFSLPTMGANVSQDNGTGHNATFSEPLPFLY) are extracellular. N-linked (GlcNAc...) asparagine glycans are attached at residues N24, N29, and N34. The helical transmembrane segment at 46–69 (VLLPAVYSGICAVGLTGNTAVILV) threads the bilayer. Topologically, residues 70-80 (ILRAPKMKTVT) are cytoplasmic. Residues 81-105 (NVFILNLAVADGLFTLVLPVNIAEH) form a helical membrane-spanning segment. Over 106–120 (LLQYWPFGELLCKLV) the chain is Extracellular. C117 and C197 are oxidised to a cystine. The chain crosses the membrane as a helical span at residues 121-140 (LAVDHYNIFSSIYFLAVMSV). Residues 141–165 (DRYLVVLATVRSRHMPWRTYRGAKV) are Cytoplasmic-facing. Residues 166–185 (ASLCVWLGVTVLVLPFFSFA) form a helical membrane-spanning segment. Topologically, residues 186-211 (GVYSNELQVPSCGLSFPWPEQVWFKA) are extracellular. Residues 212–233 (SRVYTLVLGFVLPVCTICVLYT) form a helical membrane-spanning segment. Residues 234 to 257 (DLLRRLRAVRLRSGAKALGKARRK) are Cytoplasmic-facing. Residues 258–282 (VTVLVLVVLAVCLLCWTPFHLASVV) traverse the membrane as a helical segment. Over 283-292 (ALTTDLPQTP) the chain is Extracellular. A helical transmembrane segment spans residues 293–307 (LVISMSYVITSLSYA). The Cytoplasmic portion of the chain corresponds to 308-333 (NSCLNPFLYAFLDDNFRKNFRSILRC).

This sequence belongs to the G-protein coupled receptor 1 family. As to expression, detected at high levels in caudate nucleus, hippocampus and amygdala; at moderate levels in the adult brain, thalamus, parietal cortex, pituitary gland, adrenal gland and lymph nodes.

It is found in the cell membrane. In terms of biological role, interacts specifically with a number of opioid ligands. Receptor for neuropeptides B and W, which may be involved in neuroendocrine system regulation, food intake and the organization of other signals. The sequence is that of Neuropeptides B/W receptor type 2 (NPBWR2) from Homo sapiens (Human).